Here is a 234-residue protein sequence, read N- to C-terminus: Coiled-coil domain-containing protein 194 (234 aa).

The signal sequence occupies residues 1 to 43 (MAEPGPEPGRAWRLLALCGAAVFLAAAAAGGALVAWNLAASTA). Positions 44–63 (RSPRCPEPEQMNATVRPPDS) are disordered. Residues 67–171 (VEELRRRLAE…LQRAGAAEAA (105 aa)) adopt a coiled-coil conformation. The segment at 194 to 234 (GTLRKESRLRPRSGSRTKPSISHRPKSGSTKGCRRPPRDPQ) is disordered. Residues 203–219 (RPRSGSRTKPSISHRPK) show a composition bias toward basic residues.

The chain is Coiled-coil domain-containing protein 194 from Mus musculus (Mouse).